Consider the following 216-residue polypeptide: Large ribosomal subunit protein uL3 (216 aa).

The interval 137 to 158 (GASHGAHKNHRKPGSIGGASTP) is disordered.

This sequence belongs to the universal ribosomal protein uL3 family. As to quaternary structure, part of the 50S ribosomal subunit. Forms a cluster with proteins L14 and L19.

In terms of biological role, one of the primary rRNA binding proteins, it binds directly near the 3'-end of the 23S rRNA, where it nucleates assembly of the 50S subunit. This is Large ribosomal subunit protein uL3 from Arthrobacter sp. (strain FB24).